A 272-amino-acid chain; its full sequence is 4-hydroxy-tetrahydrodipicolinate reductase (272 aa).

NAD(+)-binding positions include 11–16 (GAGGRM) and E37. R38 provides a ligand contact to NADP(+). Residues 101-103 (GTT) and 125-128 (AANF) each bind NAD(+). The active-site Proton donor/acceptor is H158. Residue H159 participates in (S)-2,3,4,5-tetrahydrodipicolinate binding. K162 acts as the Proton donor in catalysis. 168–169 (GT) is a binding site for (S)-2,3,4,5-tetrahydrodipicolinate.

It belongs to the DapB family. In terms of assembly, homotetramer.

It localises to the cytoplasm. It catalyses the reaction (S)-2,3,4,5-tetrahydrodipicolinate + NAD(+) + H2O = (2S,4S)-4-hydroxy-2,3,4,5-tetrahydrodipicolinate + NADH + H(+). The catalysed reaction is (S)-2,3,4,5-tetrahydrodipicolinate + NADP(+) + H2O = (2S,4S)-4-hydroxy-2,3,4,5-tetrahydrodipicolinate + NADPH + H(+). It functions in the pathway amino-acid biosynthesis; L-lysine biosynthesis via DAP pathway; (S)-tetrahydrodipicolinate from L-aspartate: step 4/4. In terms of biological role, catalyzes the conversion of 4-hydroxy-tetrahydrodipicolinate (HTPA) to tetrahydrodipicolinate. The polypeptide is 4-hydroxy-tetrahydrodipicolinate reductase (Edwardsiella ictaluri (strain 93-146)).